Here is a 794-residue protein sequence, read N- to C-terminus: uncharacterized protein (794 aa).

A signal peptide spans 1–22; that stretch reads MKLKYGTIIFSGLLGVSAILAA. Cysteine 23 carries the N-palmitoyl cysteine lipid modification. The S-diacylglycerol cysteine moiety is linked to residue cysteine 23. The segment covering 177–196 has biased composition (polar residues); that stretch reads SSGKTQVSQTSSGSNQQKTL. Disordered stretches follow at residues 177 to 208, 220 to 257, and 466 to 506; these read SSGK…SDSS, AKNN…DKKI, and KSTD…ENNS. Over residues 220-231 the composition is skewed to low complexity; sequence AKNNGKKANNSK. Positions 238–250 are enriched in polar residues; the sequence is DQSTQTHNDQGDA.

This sequence belongs to the MG185/MG260 family.

The protein resides in the cell membrane. This is an uncharacterized protein from Mycoplasma pneumoniae (strain ATCC 29342 / M129 / Subtype 1) (Mycoplasmoides pneumoniae).